The chain runs to 177 residues: Calcium-binding protein CML38 (177 aa).

Over residues 1 to 11 the composition is skewed to polar residues; sequence MKNNTQPQSSF. Residues 1–44 are disordered; sequence MKNNTQPQSSFKKLCRKLSPKREDSAGEIQQHNSSNGEDKNREL. EF-hand domains lie at 39 to 74, 75 to 110, 111 to 146, and 147 to 177; these read DKNRELEAVFSYMDANRDGRISPEELQKSFMTLGEQ, LSDEEAVAAVRLSDTDGDGMLDFEEFSQLIKVDDEE, EKKMELKGAFRLYIAEGEDCITPRSLKMMLKKLGES, and RTTDDCRVMISAFDLNADGVLSFDEFALMMR. Ca(2+) is bound by residues Asp-52, Asn-54, Asp-56, Arg-58, Glu-63, Asp-88, Asp-90, Asp-92, Met-94, and Glu-99. Ca(2+)-binding residues include Asp-160, Asn-162, Asp-164, and Glu-171.

Binds to ABCG36. Expressed in cotyledons and guard cells of young leaves. In mature root, expressed in the epidermis, trichoblasts, young lateral root and root tip. Expressed from stage 9 to 15 of flower development in anther wall.

Potential calcium sensor that binds calcium in vitro. This is Calcium-binding protein CML38 from Arabidopsis thaliana (Mouse-ear cress).